A 436-amino-acid chain; its full sequence is GTPase Der (436 aa).

2 consecutive EngA-type G domains span residues 4 to 167 and 175 to 351; these read PTVA…PVEE and IRFS…ESQN. Residues 10 to 17, 57 to 61, 119 to 122, 181 to 188, 229 to 233, and 294 to 297 contribute to the GTP site; these read GRPNVGKS, DTGGI, NKVD, DTAGM, and NKWD. The 85-residue stretch at 352 to 436 folds into the KH-like domain; the sequence is KRIPSAVLND…PIHLIARKRK (85 aa).

It belongs to the TRAFAC class TrmE-Era-EngA-EngB-Septin-like GTPase superfamily. EngA (Der) GTPase family. In terms of assembly, associates with the 50S ribosomal subunit.

In terms of biological role, GTPase that plays an essential role in the late steps of ribosome biogenesis. This Streptococcus uberis (strain ATCC BAA-854 / 0140J) protein is GTPase Der.